The following is a 234-amino-acid chain: Large ribosomal subunit protein uL1 (234 aa).

This sequence belongs to the universal ribosomal protein uL1 family. Part of the 50S ribosomal subunit.

Its function is as follows. Binds directly to 23S rRNA. The L1 stalk is quite mobile in the ribosome, and is involved in E site tRNA release. In terms of biological role, protein L1 is also a translational repressor protein, it controls the translation of the L11 operon by binding to its mRNA. The protein is Large ribosomal subunit protein uL1 of Psychromonas ingrahamii (strain DSM 17664 / CCUG 51855 / 37).